The chain runs to 153 residues: Gamma-glutamylaminecyclotransferase (153 aa).

7 to 10 contacts substrate; it reads YGTL. The active-site Proton acceptor is Glu-82. A disordered region spans residues 130-153; that stretch reads QLPHHDSYDSEGPHGLRYNPRENR. Positions 132–153 are enriched in basic and acidic residues; it reads PHHDSYDSEGPHGLRYNPRENR.

It belongs to the gamma-glutamylcyclotransferase family. As to quaternary structure, monomer.

It carries out the reaction epsilon-(gamma-L-glutamyl)-L-lysine = 5-oxo-L-proline + L-lysine. Contributes to degradation of proteins cross-linked by transglutaminases by degrading the cross-link between a lysine and a glutamic acid residue. Catalyzes the formation of 5-oxo-L-proline from L-gamma-glutamyl-L-epsilon-lysine. Inactive with L-gamma-glutamyl-alpha-amino acid substrates such as L-gamma-glutamyl-L-alpha-cysteine and L-gamma-glutamyl-L-alpha-alanine. The polypeptide is Gamma-glutamylaminecyclotransferase (GGACT) (Homo sapiens (Human)).